Reading from the N-terminus, the 264-residue chain is MNSLQLAREAASAARTRYRQGFVAPTAGEAPGLTQCNMITLPREWAYDFLLFAQRNPQACPVLDVTEPGSHTTLLAEQADLRTDLPLYRVWRDGQLAEELSDVSHIWAQHTDLVSFLIGCSFTFETDLMHAGIDVRHISEGCNVPMYRSNRVCRPAGRLQGNMVVSMRPIAADRVAEAARITGRYPGVHGAPVHVGEPELLGINDLANPDFGDAVTIRPGEIPVFWACGVTPQAVVMASRVPFAISHAPGHMFITDIPDSYYHV.

Belongs to the D-glutamate cyclase family.

In Pseudomonas syringae pv. syringae (strain B728a), this protein is Putative hydro-lyase Psyr_0498.